The sequence spans 715 residues: ATP-dependent DNA helicase Hel308 (715 aa).

The short motif at 1-29 (MKVEELRIDERIKEVLKKRGISELYPPQA) is the Q motif element. ATP contacts are provided by residues Q28 and 46–53 (IPTASGKT). In terms of domain architecture, Helicase ATP-binding spans 33 to 197 (TSGILKGENA…WLNAKLIKSD (165 aa)). A DEAH box motif is present at residues 145 to 148 (DEIH). Residues 229-422 (LVYDAIKRSK…ILRGQILALI (194 aa)) enclose the Helicase C-terminal domain.

Belongs to the helicase family. Hel308 subfamily. In terms of assembly, monomer.

The enzyme catalyses Couples ATP hydrolysis with the unwinding of duplex DNA by translocating in the 3'-5' direction.. The catalysed reaction is ATP + H2O = ADP + phosphate + H(+). In terms of biological role, DNA-dependent ATPase and 3'-5' DNA helicase that may be involved in repair of stalled replication forks. The protein is ATP-dependent DNA helicase Hel308 of Pyrococcus horikoshii (strain ATCC 700860 / DSM 12428 / JCM 9974 / NBRC 100139 / OT-3).